Consider the following 388-residue polypeptide: Protein RMD5 homolog (388 aa).

One can recognise a LisH domain in the interval 112 to 144 (DTHIVNQIIANFFYRQGMFDIGDCFVAETGESE). One can recognise a CTLH domain in the interval 150–207 (SFVEMYRILEAMKRRDLEPALNWAVSNSDKLKEARSDLEMKLHSLHFLEIARGKNSKE). The RING-Gid-type zinc finger occupies 330–374 (CPVSKEQSSDDNPPMMMSCGHVLCKQTINKMSKNGSKSSFKCPYC).

In terms of assembly, interacts with RANBPM.

The protein localises to the cytoplasm. The sequence is that of Protein RMD5 homolog from Arabidopsis thaliana (Mouse-ear cress).